Here is a 325-residue protein sequence, read N- to C-terminus: tRNA dimethylallyltransferase (325 aa).

16–23 provides a ligand contact to ATP; that stretch reads GPTASGKT. A substrate-binding site is contributed by 18 to 23; that stretch reads TASGKT. Interaction with substrate tRNA stretches follow at residues 41–44, 165–169, 253–258, and 286–293; these read DSAL, QRIQR, RCVGYR, and KRQITWLR.

This sequence belongs to the IPP transferase family. Monomer. Requires Mg(2+) as cofactor.

It catalyses the reaction adenosine(37) in tRNA + dimethylallyl diphosphate = N(6)-dimethylallyladenosine(37) in tRNA + diphosphate. Functionally, catalyzes the transfer of a dimethylallyl group onto the adenine at position 37 in tRNAs that read codons beginning with uridine, leading to the formation of N6-(dimethylallyl)adenosine (i(6)A). The sequence is that of tRNA dimethylallyltransferase from Ralstonia pickettii (strain 12J).